Reading from the N-terminus, the 166-residue chain is MRILGIDPGIAIVGFGVVDKEGSQLRPVQYGSIQTEAGLPVPLRLKQIFEAMQSLLETYRPDEMSVEKLFFNKNVTTAFTVGQARGVIILAAELAGVPVYEYTPMQVKQAVTGYGGAEKKQIQEMTKLLLRLKEVPKPDDVADALGIAITHAQFRAFISISEGVKK.

Active-site residues include aspartate 7, glutamate 67, and aspartate 140. Positions 7, 67, and 140 each coordinate Mg(2+).

Belongs to the RuvC family. Homodimer which binds Holliday junction (HJ) DNA. The HJ becomes 2-fold symmetrical on binding to RuvC with unstacked arms; it has a different conformation from HJ DNA in complex with RuvA. In the full resolvosome a probable DNA-RuvA(4)-RuvB(12)-RuvC(2) complex forms which resolves the HJ. Mg(2+) is required as a cofactor.

Its subcellular location is the cytoplasm. The catalysed reaction is Endonucleolytic cleavage at a junction such as a reciprocal single-stranded crossover between two homologous DNA duplexes (Holliday junction).. In terms of biological role, the RuvA-RuvB-RuvC complex processes Holliday junction (HJ) DNA during genetic recombination and DNA repair. Endonuclease that resolves HJ intermediates. Cleaves cruciform DNA by making single-stranded nicks across the HJ at symmetrical positions within the homologous arms, yielding a 5'-phosphate and a 3'-hydroxyl group; requires a central core of homology in the junction. The consensus cleavage sequence is 5'-(A/T)TT(C/G)-3'. Cleavage occurs on the 3'-side of the TT dinucleotide at the point of strand exchange. HJ branch migration catalyzed by RuvA-RuvB allows RuvC to scan DNA until it finds its consensus sequence, where it cleaves and resolves the cruciform DNA. This chain is Crossover junction endodeoxyribonuclease RuvC, found in Brevibacillus brevis (strain 47 / JCM 6285 / NBRC 100599).